The primary structure comprises 216 residues: Sugar fermentation stimulation protein homolog (216 aa).

This sequence belongs to the SfsA family.

This is Sugar fermentation stimulation protein homolog from Thermoplasma volcanium (strain ATCC 51530 / DSM 4299 / JCM 9571 / NBRC 15438 / GSS1).